Here is an 82-residue protein sequence, read N- to C-terminus: Sulfur carrier protein TusA (82 aa).

Cys-19 serves as the catalytic Cysteine persulfide intermediate.

This sequence belongs to the sulfur carrier protein TusA family.

Its subcellular location is the cytoplasm. In terms of biological role, sulfur carrier protein which probably makes part of a sulfur-relay system. The sequence is that of Sulfur carrier protein TusA from Vibrio parahaemolyticus serotype O3:K6 (strain RIMD 2210633).